The sequence spans 183 residues: Dual-action ribosomal maturation protein DarP (183 aa).

Residues 1-27 are disordered; it reads MSSHSQEPVGEENFDDSEYDRPNKSQV. Residues 9-18 are compositionally biased toward acidic residues; that stretch reads VGEENFDDSE.

This sequence belongs to the DarP family.

Its subcellular location is the cytoplasm. Its function is as follows. Member of a network of 50S ribosomal subunit biogenesis factors which assembles along the 30S-50S interface, preventing incorrect 23S rRNA structures from forming. Promotes peptidyl transferase center (PTC) maturation. The protein is Dual-action ribosomal maturation protein DarP of Bordetella pertussis (strain Tohama I / ATCC BAA-589 / NCTC 13251).